We begin with the raw amino-acid sequence, 270 residues long: (+)-cis,cis-nepetalactol synthase NEPS3 (270 aa).

NAD(+) is bound by residues 21-27 (GGASGIG), 46-48 (DIQ), 70-71 (DV), Asn97, 165-169 (YVMSK), and 198-202 (VATPL).

It belongs to the short-chain dehydrogenases/reductases (SDR) family. In terms of assembly, forms homotetramers.

It carries out the reaction (S)-8-oxocitronellyl enol = cis-cis-nepetalactol. Its function is as follows. Functions as a non-oxidoreductive cyclase to promote the formation of cis-cis-nepetalactol. Cis-cis-nepetalactol is then oxidized by NEPS1 into cis-cis-nepetalactone, which belongs to a family of metabolites that are both insect-repellent and have euphoric effect in cats. Binds NAD(+) as classical short-chain dehydrogenase/reductase (SDR), but does not utilize it for its redox-neutral cyclase activity. The sequence is that of (+)-cis,cis-nepetalactol synthase NEPS3 from Nepeta racemosa (Catmint).